Here is a 77-residue protein sequence, read N- to C-terminus: Protein UL148C (77 aa).

2 helical membrane passes run 10–30 and 35–55; these read VLYLLALVVWVEMFCLVAVAV and IAWALLLRMLVVGLMVEVGAA.

The protein resides in the host membrane. This Homo sapiens (Human) protein is Protein UL148C (UL148C).